The primary structure comprises 672 residues: Amidase chyE (672 aa).

Residue C2 is the Nucleophile of the active site. Residues 2 to 219 (CGISAFLCHP…PGHYLISRPN (218 aa)) form the Glutamine amidotransferase type-2 domain. The region spanning 250 to 639 (VRKRLLEAVK…TQEAVEKAFT (390 aa)) is the Asparagine synthetase domain.

It belongs to the asparagine synthetase family.

Its pathway is pigment biosynthesis. In terms of biological role, amidase; part of the gene cluster that mediates the biosynthesis of the yellow pigment chrysogine. the NRPS chyA mediates the condensation of anthranilic acid and alanine into the intermediate 2-(2-aminopropanamido)benzoic acid. The remainder of the pathway is highly branched yielding at least 13 chrysogine-related compounds. The malonyl transferase chyE converts 2-(2-aminopropanamido)benzoic acid and 2-(2-aminopropanamido)benzamidine into 2-(2-(2-carboxyacetamido)propanamido)benzoic acid and 3-((1-((2-carbamoylphenyl)amino)-1-oxopropan-2-yl)amino)-3-oxopropanoic acid, respectively. ChyD is an amidase, being responsible for the amidation of the carboxylic acid moiety of 2-(2-aminopropanamido)benzoic acid, 2-(2-(2-carboxyacetamido)propanamido)benzoic acid and 2-(2-((4-amino-1-carboxy-4-oxobutyl)amino)propanamido)benzoic acid. ChyC is involved in the same reactions as ChyD, but plays a more minor role in the amidation reactions compared to chyD. The oxidoreductases chyH and chyM are involved in oxidation reactions that form N-pyruvoylanthranilamide from 2-(2-aminopropanamido)benzamidine and (1-((2-carbamoylphenyl)amino)-1-oxopropan-2-yl)glutamine, respectively. N-pyruvoylanthranilamide is further converted via two further branches in the pathway, yielding chrysogine and additional chrysogine-related coumpounds. Chrysogine is likely formed by a spontaneous ring closure from N-pyruvoylanthranilamide. This chain is Amidase chyE, found in Penicillium rubens (strain ATCC 28089 / DSM 1075 / NRRL 1951 / Wisconsin 54-1255) (Penicillium chrysogenum).